The chain runs to 191 residues: Probable nicotinate-nucleotide adenylyltransferase (191 aa).

It belongs to the NadD family.

It catalyses the reaction nicotinate beta-D-ribonucleotide + ATP + H(+) = deamido-NAD(+) + diphosphate. It functions in the pathway cofactor biosynthesis; NAD(+) biosynthesis; deamido-NAD(+) from nicotinate D-ribonucleotide: step 1/1. In terms of biological role, catalyzes the reversible adenylation of nicotinate mononucleotide (NaMN) to nicotinic acid adenine dinucleotide (NaAD). The sequence is that of Probable nicotinate-nucleotide adenylyltransferase from Oceanobacillus iheyensis (strain DSM 14371 / CIP 107618 / JCM 11309 / KCTC 3954 / HTE831).